Here is a 119-residue protein sequence, read N- to C-terminus: Large ribosomal subunit protein bL17 (119 aa).

The protein belongs to the bacterial ribosomal protein bL17 family. As to quaternary structure, part of the 50S ribosomal subunit. Contacts protein L32.

The sequence is that of Large ribosomal subunit protein bL17 from Psychrobacter arcticus (strain DSM 17307 / VKM B-2377 / 273-4).